Here is a 479-residue protein sequence, read N- to C-terminus: PRAME family member 18 (479 aa).

Residues 15 to 38 form an LRR 1 repeat; the sequence is QSLLRDQALAISVLDELPRELFPP. One copy of the LRR 1; degenerate repeat lies at 97–124; it reads RWKLQVLEMRDVDENFWTIWSGARLLSC. One copy of the LRR 2; degenerate repeat lies at 179-203; that stretch reads HLCCTKVVNYSMSILNFRNILETVY. Residues 204-230 form an LRR 3; degenerate repeat; sequence PDSIQVLEIWNMCWLCMIVEFSRYLSQ. An LRR 4; degenerate repeat occupies 231-265; sequence MRNLRKLFISDGCRYLLSSDSQEQLVAEFSSVLLR. LRR repeat units lie at residues 266-291, 292-323, 324-342, 348-375, and 376-400; these read LENL…IRCL, RSPL…SQLK, QLNL…PLRA, AATL…ALSR, and CSNL…LLRH.

The protein belongs to the PRAME family.

The protein is PRAME family member 18 of Homo sapiens (Human).